Reading from the N-terminus, the 890-residue chain is DNA mismatch repair protein MutS (890 aa).

645–652 (GPNMAGKS) lines the ATP pocket.

The protein belongs to the DNA mismatch repair MutS family.

Its function is as follows. This protein is involved in the repair of mismatches in DNA. It is possible that it carries out the mismatch recognition step. This protein has a weak ATPase activity. This Rickettsia africae (strain ESF-5) protein is DNA mismatch repair protein MutS.